We begin with the raw amino-acid sequence, 198 residues long: Holliday junction branch migration complex subunit RuvA (198 aa).

Residues 1–63 (MIALLTGQIA…EDAIQLYGFR (63 aa)) form a domain I region. The tract at residues 64 to 142 (TSLEKSFFQL…KLDLSSVVVP (79 aa)) is domain II. The interval 143–153 (EPRQMPEDDLL) is flexible linker. Residues 153–198 (LEDVVSALLNLGYKEPQVRKVLAGLNPGSDASLEGVLKQALKSLMR) form a domain III region.

This sequence belongs to the RuvA family. Homotetramer. Forms an RuvA(8)-RuvB(12)-Holliday junction (HJ) complex. HJ DNA is sandwiched between 2 RuvA tetramers; dsDNA enters through RuvA and exits via RuvB. An RuvB hexamer assembles on each DNA strand where it exits the tetramer. Each RuvB hexamer is contacted by two RuvA subunits (via domain III) on 2 adjacent RuvB subunits; this complex drives branch migration. In the full resolvosome a probable DNA-RuvA(4)-RuvB(12)-RuvC(2) complex forms which resolves the HJ.

The protein resides in the cytoplasm. Functionally, the RuvA-RuvB-RuvC complex processes Holliday junction (HJ) DNA during genetic recombination and DNA repair, while the RuvA-RuvB complex plays an important role in the rescue of blocked DNA replication forks via replication fork reversal (RFR). RuvA specifically binds to HJ cruciform DNA, conferring on it an open structure. The RuvB hexamer acts as an ATP-dependent pump, pulling dsDNA into and through the RuvAB complex. HJ branch migration allows RuvC to scan DNA until it finds its consensus sequence, where it cleaves and resolves the cruciform DNA. The sequence is that of Holliday junction branch migration complex subunit RuvA from Pelobacter propionicus (strain DSM 2379 / NBRC 103807 / OttBd1).